Here is a 175-residue protein sequence, read N- to C-terminus: MSGTGSAGMARGLRVDGLPPLPKSLSGLLHSAAGGAAGGWRHLERLYAQKSRIQDELNRGGAGGGGARAAGMRTKPPNLDAALALLRKEMVGLRQLDMSLLCQLYSLYESIQEYKGACQAASSLDCTYALENGFFDDEEDFQEQGSLQDGQHHGSPRDQSPLTHLSSSDWILESI.

The tract at residues 141 to 175 (FQEQGSLQDGQHHGSPRDQSPLTHLSSSDWILESI) is disordered. Residues 157-169 (RDQSPLTHLSSSD) are compositionally biased toward polar residues.

Belongs to the FAM89 family.

The sequence is that of Protein FAM89A (Fam89a) from Mus musculus (Mouse).